A 280-amino-acid polypeptide reads, in one-letter code: Phosphatidylserine decarboxylase proenzyme (280 aa).

Active-site charge relay system; for autoendoproteolytic cleavage activity residues include D88, H144, and S247. Catalysis depends on S247, which acts as the Schiff-base intermediate with substrate; via pyruvic acid; for decarboxylase activity. At S247 the chain carries Pyruvic acid (Ser); by autocatalysis.

This sequence belongs to the phosphatidylserine decarboxylase family. PSD-B subfamily. Prokaryotic type I sub-subfamily. As to quaternary structure, heterodimer of a large membrane-associated beta subunit and a small pyruvoyl-containing alpha subunit. The cofactor is pyruvate. In terms of processing, is synthesized initially as an inactive proenzyme. Formation of the active enzyme involves a self-maturation process in which the active site pyruvoyl group is generated from an internal serine residue via an autocatalytic post-translational modification. Two non-identical subunits are generated from the proenzyme in this reaction, and the pyruvate is formed at the N-terminus of the alpha chain, which is derived from the carboxyl end of the proenzyme. The autoendoproteolytic cleavage occurs by a canonical serine protease mechanism, in which the side chain hydroxyl group of the serine supplies its oxygen atom to form the C-terminus of the beta chain, while the remainder of the serine residue undergoes an oxidative deamination to produce ammonia and the pyruvoyl prosthetic group on the alpha chain. During this reaction, the Ser that is part of the protease active site of the proenzyme becomes the pyruvoyl prosthetic group, which constitutes an essential element of the active site of the mature decarboxylase.

The protein localises to the cell membrane. It catalyses the reaction a 1,2-diacyl-sn-glycero-3-phospho-L-serine + H(+) = a 1,2-diacyl-sn-glycero-3-phosphoethanolamine + CO2. It functions in the pathway phospholipid metabolism; phosphatidylethanolamine biosynthesis; phosphatidylethanolamine from CDP-diacylglycerol: step 2/2. Catalyzes the formation of phosphatidylethanolamine (PtdEtn) from phosphatidylserine (PtdSer). The chain is Phosphatidylserine decarboxylase proenzyme from Stenotrophomonas maltophilia (strain R551-3).